Reading from the N-terminus, the 362-residue chain is Putative F-box/kelch-repeat protein At3g20710 (362 aa).

Residues 1-50 (MMMSNLPKDLVEEILSRVPFKYLRAIRSTCKNWYDLSKNRSFANKNIDKA) enclose the F-box domain. 2 Kelch repeats span residues 150–201 (YDKS…VSLN) and 293–341 (IYCR…YFKS).

In Arabidopsis thaliana (Mouse-ear cress), this protein is Putative F-box/kelch-repeat protein At3g20710.